We begin with the raw amino-acid sequence, 315 residues long: Ribose-phosphate pyrophosphokinase (315 aa).

ATP-binding positions include 37-39 and 96-97; these read DGE and RQ. His131 and Asp170 together coordinate Mg(2+). Residue Lys194 is part of the active site. D-ribose 5-phosphate is bound by residues Arg196, Asp220, and 224–228; that span reads DTGGT.

This sequence belongs to the ribose-phosphate pyrophosphokinase family. Class I subfamily. As to quaternary structure, homohexamer. Mg(2+) serves as cofactor.

It localises to the cytoplasm. It catalyses the reaction D-ribose 5-phosphate + ATP = 5-phospho-alpha-D-ribose 1-diphosphate + AMP + H(+). The protein operates within metabolic intermediate biosynthesis; 5-phospho-alpha-D-ribose 1-diphosphate biosynthesis; 5-phospho-alpha-D-ribose 1-diphosphate from D-ribose 5-phosphate (route I): step 1/1. Involved in the biosynthesis of the central metabolite phospho-alpha-D-ribosyl-1-pyrophosphate (PRPP) via the transfer of pyrophosphoryl group from ATP to 1-hydroxyl of ribose-5-phosphate (Rib-5-P). This is Ribose-phosphate pyrophosphokinase from Salmonella typhi.